A 467-amino-acid polypeptide reads, in one-letter code: Proton extrusion protein PxcA (467 aa).

Over residues 146–161 (SQVRTTSSQPPENPSL) the composition is skewed to polar residues. Disordered stretches follow at residues 146–167 (SQVR…ALRT) and 186–205 (PQLI…KADT). Positions 191–203 (QRTEQSKKSRGKA) are enriched in basic and acidic residues. 4 helical membrane-spanning segments follow: residues 249–269 (FILL…ALIV), 352–372 (IFSV…IMVL), 391–411 (IIIL…WEVI), and 427–447 (FIFL…KYWI).

It belongs to the CemA family.

Its subcellular location is the cell inner membrane. In terms of biological role, required for H(+) efflux immediately after light irradiation to form a rapid H(+) concentration gradient across the thylakoid membranes. Together with PxcL, contributes to transient H(+) uptake following dark to light transition. This is Proton extrusion protein PxcA from Nostoc sp. (strain PCC 7120 / SAG 25.82 / UTEX 2576).